A 93-amino-acid chain; its full sequence is Putative protein adenylyltransferase MJ0435 (93 aa).

The GSX(10)DXD motif motif lies at 26–40; sequence GSYARNEQKETSDID. 3 residues coordinate Mg(2+): Asp38, Asp40, and Asp70.

It belongs to the MntA antitoxin family. Probably forms a complex with cognate toxin MJ0434. Mg(2+) is required as a cofactor.

It carries out the reaction L-tyrosyl-[protein] + ATP = O-(5'-adenylyl)-L-tyrosyl-[protein] + diphosphate. The catalysed reaction is O-(5'-adenylyl)-L-tyrosyl-[protein] + ATP = O-[5'-(adenylyl-(5'-&gt;3')-adenylyl)]-L-tyrosyl-[protein] + diphosphate. In terms of biological role, probable antitoxin component of a putative type VII toxin-antitoxin (TA) system. Neutralizes cognate toxic MJ0434 by di-AMPylation. In Methanocaldococcus jannaschii (strain ATCC 43067 / DSM 2661 / JAL-1 / JCM 10045 / NBRC 100440) (Methanococcus jannaschii), this protein is Putative protein adenylyltransferase MJ0435.